We begin with the raw amino-acid sequence, 274 residues long: uncharacterized protein (274 aa).

This is an uncharacterized protein from Mycobacterium tuberculosis (strain ATCC 25618 / H37Rv).